The primary structure comprises 474 residues: MFRVKIISQKRTKSVQMLENDQLDILGQQPSLYKLYTQICSIYRVPDPSAHDHIVNTLTRGLETLAKNFQWLAGNVVNEGADEGNTGTYRIVPSDKIPLIVQDLREDLSAPTMDSLEKADFPIYMLDEKTFAPCMTINPPGNTIGMAAKSGPVFAVQANFISGGLVLTIVGQHNIMDITGQESIINLLNKSCHQKPFSDEELLIGNIDKSKSIPLFDETWEPDTTLVHEIVETSRNTSGEEKEQSCSSNSTWAYVEFSAISLQNLRILAMQTCTSGTKFVSTDDIVTAFIWKSVSRARLSRLKPETKSNLGRAVDVRKRLGLPETYPGLLVNMTFNTGSLKSLDHKSLGVLASQIRRKLDPKVFDLAYNTCALATLLSRCPDKTKVSIPQPIDTLSGIMVSSWAKVSLYDVDFNLGLGKPKSVRRPRFISLESLIYFMPRSSRGEMVVALCLRDKDWECLNADKEWTNYATHIG.

This sequence belongs to the trichothecene 3-O-acetyltransferase family.

In terms of biological role, trichothecene 3-O-acetyltransferase involved in self-protection against trichothecenes, mycotoxins acting as eukaryotic protein synthesis inhibitors. Its existence is surprising in a non-trichothecene producer organism which needs no self-protection again endogenic trichothecenes. The persistence of this non-essential gene may be due to a selective advantage that it may confer, like a resistance to exogenic trichothecenes. The chain is Trichothecene 3-O-acetyltransferase (AYT1) from Saccharomyces cerevisiae (strain ATCC 204508 / S288c) (Baker's yeast).